The sequence spans 316 residues: DnaJ homolog subfamily B member 13 (316 aa).

The 65-residue stretch at 4–68 (DYYSVLGITR…MKRGIYDKFG (65 aa)) folds into the J domain.

In terms of assembly, homodimer. Component of the axonemal radial spoke complex 1 (RS1), at least composed of spoke head proteins RSPH1, RSPH3, RSPH9 and the cilia-specific component RSPH4A or sperm-specific component RSPH6A, spoke stalk proteins RSPH14, DNAJB13, DYDC1, ROPN1L and NME5, and the anchor protein IQUB. Interacts with SUN5. Interacts with IQUB. Specifically expressed in testis and trachea.

It localises to the cell projection. The protein resides in the cilium. Its subcellular location is the flagellum. Its function is as follows. Functions as part of axonemal radial spoke complexes that play an important part in the motility of sperm and cilia. This Homo sapiens (Human) protein is DnaJ homolog subfamily B member 13 (DNAJB13).